An 810-amino-acid chain; its full sequence is RING finger protein unkempt homolog (810 aa).

A disordered region spans residues 1 to 24 (MSKGPGPGGSAASSAPPAATAQVL). Positions 10-19 (SAASSAPPAA) are enriched in low complexity. 5 consecutive C3H1-type zinc fingers follow at residues 84–113 (YSPDVYCTKYDEATGLCPEGDECPFLHRTT), 124–154 (YYKTGICIHETDSKGNCTKNGLHCAFAHGPH), 215–241 (NYKTEPCKKPPRLCRQGYACPYYHNSK), 251–285 (KYRSSPCPNVKHGDEWGDPGKCENGDACQYCHTRT), and 293–321 (IYKSTKCNDMQQSGSCPRGPFCAFAHVEQ). A disordered region spans residues 239 to 265 (NSKDRRRSPRKHKYRSSPCPNVKHGDE). Position 240 is a phosphoserine (Ser-240). Residues 241–253 (KDRRRSPRKHKYR) show a composition bias toward basic residues. The segment at 324–343 (LSDDLQPSSTVSSPTQPGPV) is disordered. A compositionally biased stretch (low complexity) spans 329–343 (QPSSTVSSPTQPGPV). Phosphoserine is present on residues Ser-374, Ser-378, and Ser-385. Residues 569–585 (SASFHSASPSPPVSLSS) are compositionally biased toward low complexity. The tract at residues 569-602 (SASFHSASPSPPVSLSSHFLQQPQGHLSQSENTF) is disordered. Residues 586–602 (HFLQQPQGHLSQSENTF) are compositionally biased toward polar residues. Ser-631 carries the phosphoserine modification. A coiled-coil region spans residues 643–723 (GAAELARLRQ…QEELERLHSG (81 aa)). An RING-type; degenerate zinc finger spans residues 766-801 (SVKCLKCQEQNRAVLPCQHAVLCELCAEGSECPVCQ).

Belongs to the unkempt family.

It is found in the cytoplasm. In terms of biological role, sequence-specific RNA-binding protein which plays an important role in the establishment and maintenance of the early morphology of cortical neurons during embryonic development. Acts as a translation repressor and controls a translationally regulated cell morphology program to ensure proper structuring of the nervous system. Translational control depends on recognition of its binding element within target mRNAs which consists of a mandatory UAG trimer upstream of a U/A-rich motif. Associated with polysomes. This Canis lupus familiaris (Dog) protein is RING finger protein unkempt homolog (UNK).